Consider the following 747-residue polypeptide: Myotubularin-related protein 12 (747 aa).

The Myotubularin phosphatase domain maps to 205–643; it reads FDTLKDWCWE…PEIKVWAQRY (439 aa). Residues 449-558 form an interaction with MTM1 region; sequence VPVFLLFLDC…KGQRKGMRFK (110 aa). Residues serine 564, serine 601, and serine 716 each carry the phosphoserine modification.

The protein belongs to the protein-tyrosine phosphatase family. Non-receptor class myotubularin subfamily. Heterodimer with lipid phosphatase MTM1. Heterodimer with lipid phosphatase MTMR2. In terms of tissue distribution, expressed in skeletal muscles (at protein level). Ubiquitous with prominent expression in brain, heart, kidney, placenta, and lung.

Its subcellular location is the cytoplasm. It is found in the sarcoplasmic reticulum. It localises to the myofibril. The protein localises to the sarcomere. In terms of biological role, acts as an adapter for the myotubularin-related phosphatases. Regulates phosphatase MTM1 protein stability and possibly its intracellular location. By stabilizing MTM1 protein levels, required for skeletal muscle maintenance but not for myogenesis. The sequence is that of Myotubularin-related protein 12 (MTMR12) from Homo sapiens (Human).